The chain runs to 330 residues: Methionyl-tRNA formyltransferase (330 aa).

(6S)-5,6,7,8-tetrahydrofolate is bound at residue 112 to 115 (SLLP).

The protein belongs to the Fmt family.

The catalysed reaction is L-methionyl-tRNA(fMet) + (6R)-10-formyltetrahydrofolate = N-formyl-L-methionyl-tRNA(fMet) + (6S)-5,6,7,8-tetrahydrofolate + H(+). Its function is as follows. Attaches a formyl group to the free amino group of methionyl-tRNA(fMet). The formyl group appears to play a dual role in the initiator identity of N-formylmethionyl-tRNA by promoting its recognition by IF2 and preventing the misappropriation of this tRNA by the elongation apparatus. The sequence is that of Methionyl-tRNA formyltransferase from Synechocystis sp. (strain ATCC 27184 / PCC 6803 / Kazusa).